We begin with the raw amino-acid sequence, 271 residues long: MNEETGIPDDNLLTIEQAIANLQSEDLGLRVYAAWWLGRFRVNVPEAIDLLIAALADEADRTEAGGYPLRRNAARALGKLGDRRAVPALITSLECDDFYVREAVAQSLEMLGDNSCVPYLIELIKNPNPEASADTEPEHPYDAFLEALGTLGAVKAIPHILPFLDHPIPKVQYAAARAMYQLSEPMVADQYGDRLVAALANDDLQLRRTVLSDLGAIGYLSAAEAIGNTMAENSLKLISLKGLLEKQIVLATPPDLTDGAIRVMALMDDLL.

It belongs to the CpcE/RpcE/PecE family. CpcE and CpcF associate to form a lyase.

Required for the chromophorylation of the cpcA1 gene product. This is Phycocyanobilin lyase subunit alpha (cpcE1) from Pseudanabaena tenuis (strain PCC 7409).